Here is a 464-residue protein sequence, read N- to C-terminus: UPF0210 protein MA_1691 (464 aa).

The protein belongs to the UPF0210 family.

The chain is UPF0210 protein MA_1691 from Methanosarcina acetivorans (strain ATCC 35395 / DSM 2834 / JCM 12185 / C2A).